We begin with the raw amino-acid sequence, 218 residues long: Ras-related protein Rab-4A (218 aa).

GTP contacts are provided by G23, T24, G25, K26, S27, C28, S42, H44, and T45. Residue S27 participates in Mg(2+) binding. Residues 44-49 (HTIGVE) carry the Switch 1 motif. Mg(2+)-binding residues include T45 and D68. Positions 70–79 (AGQERFRSVT) match the Switch 2 motif. G71 is a GTP binding site. Q72 carries the post-translational modification 5-glutamyl serotonin. GTP contacts are provided by N126, K127, D129, A157, and L158. At S190 the chain carries Phosphoserine. Phosphoserine; by CDK1 is present on S204. S-geranylgeranyl cysteine attachment occurs at residues C216 and C218. C218 is modified (cysteine methyl ester).

This sequence belongs to the small GTPase superfamily. Rab family. In terms of assembly, interacts with SGSM1, SGSM2 and SGSM3. Interacts with RAB11FIP1, RABEP1, ZFYVE20 and RUFY1. Interacts (membrane-bound form) with NDRG1; the interaction involves NDRG1 in vesicular recycling of E-cadherin. Interacts (in GTP-bound form) with GRIPAP1 (via N-terminus). Interacts with RABEP1 and RBSN. Does not interact with HPS4. Does not interact with HPS4. Interacts with RABEP2; this interaction may mediate VEGFR2 cell surface expression. Mg(2+) serves as cofactor. Post-translationally, serotonylation of Gln-72 by TGM2 during activation and aggregation of platelets leads to constitutive activation of GTPase activity. In terms of processing, phosphorylated by CDK1 kinase during mitosis. As to expression, expressed in the central nervous system, including cortex, cerebellum, midbrain and spinal cord, and in the kidney, lung, liver and spleen.

The protein resides in the membrane. It localises to the cytoplasm. Its subcellular location is the early endosome membrane. The protein localises to the recycling endosome membrane. The catalysed reaction is GTP + H2O = GDP + phosphate + H(+). With respect to regulation, regulated by guanine nucleotide exchange factors (GEFs) which promote the exchange of bound GDP for free GTP. Regulated by GTPase activating proteins (GAPs) which increase the GTP hydrolysis activity. Inhibited by GDP dissociation inhibitors (GDIs). The small GTPases Rab are key regulators of intracellular membrane trafficking, from the formation of transport vesicles to their fusion with membranes. Rabs cycle between an inactive GDP-bound form and an active GTP-bound form that is able to recruit to membranes different sets of downstream effectors directly responsible for vesicle formation, movement, tethering and fusion. RAB4A is involved in protein transport. Also plays a role in vesicular traffic. Mediates VEGFR2 endosomal trafficking to enhance VEGFR2 signaling. Acts as a regulator of platelet alpha-granule release during activation and aggregation of platelets. The sequence is that of Ras-related protein Rab-4A from Mus musculus (Mouse).